Here is a 132-residue protein sequence, read N- to C-terminus: Intraflagellar transport protein 20 homolog B (132 aa).

Residues 87–112 (EAQQQQLYALIAEKKMQLERYRIEYD) are a coiled coil.

The protein resides in the golgi apparatus. It is found in the cis-Golgi network. It localises to the cytoplasm. The protein localises to the cytoskeleton. Its subcellular location is the microtubule organizing center. The protein resides in the centrosome. It is found in the centriole. It localises to the cell projection. The protein localises to the cilium. Its function is as follows. Involved in ciliary process assembly. May play a role in the trafficking of ciliary membrane proteins from the Golgi complex to the cilium. Regulates the platelet-derived growth factor receptor-alpha (PDGFRA) signaling pathway. Plays an important role in spermatogenesis, particularly spermiogenesis, when germ cells form flagella. The chain is Intraflagellar transport protein 20 homolog B (ift20-b) from Xenopus laevis (African clawed frog).